The chain runs to 356 residues: Tyrosine recombinase XerS (356 aa).

One can recognise a Core-binding (CB) domain in the interval 16–121 (IMPWYVLDYY…ALSSLYKYLT (106 aa)). The 186-residue stretch at 169–354 (AFLDYVDKEY…VNDEQKNALD (186 aa)) folds into the Tyr recombinase domain. Catalysis depends on residues arginine 210, lysine 234, histidine 306, arginine 309, and histidine 332. The active-site O-(3'-phospho-DNA)-tyrosine intermediate is the tyrosine 341.

It belongs to the 'phage' integrase family. XerS subfamily.

Its subcellular location is the cytoplasm. With respect to regulation, ftsK is required for recombination. Its function is as follows. Site-specific tyrosine recombinase, which acts by catalyzing the cutting and rejoining of the recombining DNA molecules. Essential to convert dimers of the bacterial chromosome into monomers to permit their segregation at cell division. This Streptococcus pyogenes serotype M1 protein is Tyrosine recombinase XerS.